Here is a 136-residue protein sequence, read N- to C-terminus: Large ribosomal subunit protein uL16c (136 aa).

This sequence belongs to the universal ribosomal protein uL16 family. As to quaternary structure, part of the 50S ribosomal subunit.

It is found in the plastid. The protein resides in the chloroplast. In Chloranthus spicatus (Chulantree), this protein is Large ribosomal subunit protein uL16c.